The sequence spans 59 residues: MFFYDWYVGLNDVIYDCIAILALGCAITCLLLILHRSALHRLHLVYADGSRRYCQFAAI.

Residues 13–33 (VIYDCIAILALGCAITCLLLI) traverse the membrane as a helical; Signal-anchor for type III membrane protein segment.

The protein resides in the membrane. In Equine arteritis virus (strain Bucyrus) (EAV), this protein is Protein ORF5a (GP5).